The sequence spans 338 residues: RAB6-interacting golgin (338 aa).

2 stretches are compositionally biased toward basic and acidic residues: residues 1–14 and 46–59; these read MTEKFNGFSHDEIL and RMPDKIFRQADQLR. Disordered regions lie at residues 1–109 and 127–188; these read MTEK…LNLD and ARDK…SPFK. 2 stretches are compositionally biased toward low complexity: residues 60–73 and 153–167; these read KQQQQQPQQPIQKP and SGGDSQTTSSTDDGS. Positions 192-244 form a coiled coil; sequence LKDFEQHRRMIEEQNKQKKQMLYQAIEQHTQKTAAESRKIEEIRHELSKLESD. The segment at 244–260 is essential for Sas-6 binding; the sequence is DLAVDVALLRKQIDNAC. Residues 246 to 286 are necessary for localization to the centrosome; sequence AVDVALLRKQIDNACIHFANVEKQYVKIEAQFLRAKIELHN. The tract at residues 246-323 is necessary for localization to the Golgi; it reads AVDVALLRKQ…TELMQKVGLS (78 aa). Residues 260–286 form a necessary for interaction with Sas-6 and essential for homodimerization region; it reads CIHFANVEKQYVKIEAQFLRAKIELHN.

The protein belongs to the GORAB family. In terms of assembly, homodimer (via C-terminus); dimerization appears to be required for its trans-Golgi localization but not for its function and centriolar localization. Interacts (via C-terminus) with Rab6; binds Rab6 as a homodimer, this interaction seems to be required for trans-Golgi localization. Interacts (via C-terminus) with Sas-6; binds as a monomer to a Sas-6 homodimer.

It is found in the cytoplasm. The protein localises to the cytoskeleton. The protein resides in the microtubule organizing center. It localises to the centrosome. Its subcellular location is the centriole. It is found in the golgi apparatus. The protein localises to the trans-Golgi network. Functionally, required for centriole duplication likely through its interaction with Sas-6. During embryogenesis, maternally provided protein is required for centrosome duplication and nuclear division cycles of the syncytial embryos. In femoral chordotonal organs, required for sensory cilia structural integrity and functionality necessary for motor coordination. In male germline, has a role in cytokinesis which seems dependent on its localization to the Golgi. This chain is RAB6-interacting golgin, found in Drosophila melanogaster (Fruit fly).